We begin with the raw amino-acid sequence, 93 residues long: Small ribosomal subunit protein uS19 (93 aa).

It belongs to the universal ribosomal protein uS19 family.

In terms of biological role, protein S19 forms a complex with S13 that binds strongly to the 16S ribosomal RNA. In Nitratidesulfovibrio vulgaris (strain ATCC 29579 / DSM 644 / CCUG 34227 / NCIMB 8303 / VKM B-1760 / Hildenborough) (Desulfovibrio vulgaris), this protein is Small ribosomal subunit protein uS19.